The chain runs to 629 residues: tRNA uridine 5-carboxymethylaminomethyl modification enzyme MnmG (629 aa).

Position 13–18 (13–18) interacts with FAD; sequence GGGHAG. Residue 273–287 coordinates NAD(+); that stretch reads GPRYCPSIEDKIHRF.

It belongs to the MnmG family. In terms of assembly, homodimer. Heterotetramer of two MnmE and two MnmG subunits. FAD serves as cofactor.

It localises to the cytoplasm. NAD-binding protein involved in the addition of a carboxymethylaminomethyl (cmnm) group at the wobble position (U34) of certain tRNAs, forming tRNA-cmnm(5)s(2)U34. The polypeptide is tRNA uridine 5-carboxymethylaminomethyl modification enzyme MnmG (Shewanella baltica (strain OS195)).